Consider the following 239-residue polypeptide: Cysteine-rich venom protein ENH1 (239 aa).

The N-terminal stretch at 1–18 (MIVFILLSLAAVLQQFVA) is a signal peptide. Positions 37–165 (VDMHNSFRRS…PYNYFYVCQY (129 aa)) constitute an SCP domain. Disulfide bonds link C74–C152, C91–C166, C147–C163, C185–C192, C188–C197, C210–C228, and C219–C232. A ShKT domain is found at 201-234 (CPITNTFTNCDSLLQQNSCEDSYIKTNCGASCFC).

It belongs to the CRISP family. In terms of tissue distribution, expressed by the venom gland.

The protein resides in the secreted. Functionally, blocks contraction of smooth muscle elicited by high potassium-induced depolarization, but does not block caffeine-stimulated contraction. May target voltage-gated calcium channels on smooth muscle. The sequence is that of Cysteine-rich venom protein ENH1 from Pseudoferania polylepis (Macleay's water snake).